The primary structure comprises 60 residues: Large ribosomal subunit protein bL32 (60 aa).

Belongs to the bacterial ribosomal protein bL32 family.

This is Large ribosomal subunit protein bL32 from Pediococcus pentosaceus (strain ATCC 25745 / CCUG 21536 / LMG 10740 / 183-1w).